We begin with the raw amino-acid sequence, 1024 residues long: Beta-galactosidase (1024 aa).

Positions 103 and 202 each coordinate substrate. Asp-202 contacts Na(+). Mg(2+)-binding residues include Glu-417, His-419, and Glu-462. Substrate-binding positions include Glu-462 and 538–541 (EYAH). Glu-462 (proton donor) is an active-site residue. Glu-538 functions as the Nucleophile in the catalytic mechanism. Asn-598 contacts Mg(2+). 2 residues coordinate Na(+): Phe-602 and Asn-605. Substrate contacts are provided by Asn-605 and Trp-1000.

Belongs to the glycosyl hydrolase 2 family. As to quaternary structure, homotetramer. Requires Mg(2+) as cofactor. It depends on Na(+) as a cofactor.

The enzyme catalyses Hydrolysis of terminal non-reducing beta-D-galactose residues in beta-D-galactosides.. In Escherichia coli (strain SMS-3-5 / SECEC), this protein is Beta-galactosidase.